The primary structure comprises 378 residues: MKLKEVTEGKVRIFVPDPKEYMIEGKFDPSWAPVFYNPKMTFNRDLSVIVVSLLKPKIILDALSATGIRGIRYYVESWKSEQLILNDKNSTAASLIQINVKNNGIENAKIYNKDANALLYEIKSEYIDIDPFGSPVPFILSSVNATIRNGIVAFTATDLSPLEGSSRTSCRRKYDAINYKLSSSKELGLRILIGKIIREAATLEKTVHPLFSFYADYYYRLFVIVESGARKADENINKNLKYFGECPRCGFQTFVDENCKTKCPICGENFIIIGPLYIGPLHNMEFLKRMIDTYSDFNYLSSFNRIQKLLNVIEKEAKYKSVFYNISKLASKLKVSAIPPIDSILECLGDASKTHFAPTGIRTDKGYEEIIRCVKSLR.

The region spanning 4–374 is the Trm1 methyltransferase domain; that stretch reads KEVTEGKVRI…KGYEEIIRCV (371 aa). Arg-44, Arg-69, Asp-87, Asp-114, and Ala-115 together coordinate S-adenosyl-L-methionine. Zn(2+)-binding residues include Cys-246, Cys-249, Cys-263, and Cys-266.

The protein belongs to the class I-like SAM-binding methyltransferase superfamily. Trm1 family.

The enzyme catalyses guanosine(26) in tRNA + 2 S-adenosyl-L-methionine = N(2)-dimethylguanosine(26) in tRNA + 2 S-adenosyl-L-homocysteine + 2 H(+). Its function is as follows. Dimethylates a single guanine residue at position 26 of a number of tRNAs using S-adenosyl-L-methionine as donor of the methyl groups. This is tRNA (guanine(26)-N(2))-dimethyltransferase from Saccharolobus islandicus (strain L.S.2.15 / Lassen #1) (Sulfolobus islandicus).